A 1062-amino-acid polypeptide reads, in one-letter code: Cell division control protein 7 (1062 aa).

Residues 9–259 (ITLGDCLGKG…TRKLLKHPWV (251 aa)) enclose the Protein kinase domain. ATP is bound by residues 15–23 (LGKGAFGAV) and lysine 38. The active-site Proton acceptor is aspartate 131. 2 stretches are compositionally biased toward polar residues: residues 296 to 310 (NRIN…QSSY) and 376 to 394 (AFNS…SPLS). Disordered stretches follow at residues 296–331 (NRIN…NWDN), 361–394 (NNSS…SPLS), and 1038–1062 (NEHK…PLTQ).

Belongs to the protein kinase superfamily. Ser/Thr protein kinase family. CDC7 subfamily. Interacts with spg1. Seems to interact with cdc11. Mg(2+) is required as a cofactor.

The catalysed reaction is L-seryl-[protein] + ATP = O-phospho-L-seryl-[protein] + ADP + H(+). It catalyses the reaction L-threonyl-[protein] + ATP = O-phospho-L-threonyl-[protein] + ADP + H(+). Protein kinase essential for cell division. Plays a key role in initiation of septum formation and cytokinesis. This Schizosaccharomyces pombe (strain 972 / ATCC 24843) (Fission yeast) protein is Cell division control protein 7 (cdc7).